Consider the following 220-residue polypeptide: Probable septum site-determining protein MinC (220 aa).

This sequence belongs to the MinC family. In terms of assembly, interacts with MinD and FtsZ.

Cell division inhibitor that blocks the formation of polar Z ring septums. Rapidly oscillates between the poles of the cell to destabilize FtsZ filaments that have formed before they mature into polar Z rings. Prevents FtsZ polymerization. The polypeptide is Probable septum site-determining protein MinC (Vibrio campbellii (strain ATCC BAA-1116)).